Here is a 444-residue protein sequence, read N- to C-terminus: CRAL-TRIO domain-containing protein C3H8.02 (444 aa).

Ser40 is modified (phosphoserine). Thr43 bears the Phosphothreonine mark. Ser81 carries the post-translational modification Phosphoserine. One can recognise a CRAL-TRIO domain in the interval Asp171–Tyr330. Thr418 is modified (phosphothreonine).

The chain is CRAL-TRIO domain-containing protein C3H8.02 from Schizosaccharomyces pombe (strain 972 / ATCC 24843) (Fission yeast).